The chain runs to 298 residues: MFKENTIKLGIAPIAWTNDDMPELGAENTFEQCISEMALAGFNGSEVGNKYPRNTVVLKKSLELRNLEIASAWFSTFLTTKPIEETVEEFIKHRDFLHGMGAKVIVVSEQGHSIQGLMDVPLFKNKPVFTEEEWEKLADGLHHLGKLAQEKGLHIVYHHHMGTGVQTTTEIEKLMDMTDPALVSLLFDTGHLVFSGEEPLYILKKYLPRIKHVHLKDIRQEVVDVVKEKELSFLQAVKNGAFTVPGDGVIVFDEVFTILANSNYQGWFVVEAEQDPALANPFEYALKARKFIQEKAGL.

This sequence belongs to the IolE/MocC family. Glutathione serves as cofactor. The cofactor is Co(2+). Mn(2+) is required as a cofactor.

It catalyses the reaction scyllo-inosose = 3D-3,5/4-trihydroxycyclohexane-1,2-dione + H2O. It participates in polyol metabolism; myo-inositol degradation into acetyl-CoA; acetyl-CoA from myo-inositol: step 2/7. In terms of biological role, catalyzes the dehydration of inosose (2-keto-myo-inositol, 2KMI or 2,4,6/3,5-pentahydroxycyclohexanone) to 3D-(3,5/4)-trihydroxycyclohexane-1,2-dione (D-2,3-diketo-4-deoxy-epi-inositol). In Bacillus anthracis (strain CDC 684 / NRRL 3495), this protein is Inosose dehydratase.